The primary structure comprises 172 residues: WW domain binding protein VOPP1 (172 aa).

A signal peptide spans 1-22; sequence MRRQPAKVAALLLGLLLECTEA. At 23 to 60 the chain is on the extracellular side; it reads KKHCWYFEGLYPTYYICRSYEDCCGSRCCVRALSIQRL. A helical transmembrane segment spans residues 61–81; that stretch reads WYFWFLLMMGVLFCCGAGFFI. Over 82–172 the chain is Cytoplasmic; it reads RRRMYPPPLI…PPYEQVVKAK (91 aa). The segment at 102 to 153 is disordered; that stretch reads RQPPNPGPGAQQPGPPYYTDPGGPGMNPVGNSMAMAFQVPPNSPQGSVACPP. Pro residues predominate over residues 104-119; the sequence is PPNPGPGAQQPGPPYY.

It belongs to the VOPP1/ECOP family. In terms of assembly, interacts with WWOX (via WW domain). As to expression, widely expressed with highest levels in thymus and ovary.

Its subcellular location is the cytoplasmic vesicle membrane. The protein resides in the late endosome membrane. The protein localises to the lysosome membrane. In terms of biological role, increases the transcriptional activity of NFKB1 by facilitating its nuclear translocation, DNA-binding and associated apoptotic response, when overexpressed. May sequester WWOX in lysosomal vesicles and thereby regulate WWOX role as tumor suppressor. The chain is WW domain binding protein VOPP1 from Homo sapiens (Human).